A 443-amino-acid polypeptide reads, in one-letter code: 3-phosphoshikimate 1-carboxyvinyltransferase (443 aa).

The disordered stretch occupies residues 1-25; the sequence is MSHSAEPLPMTARRSGPLTGEAQVP. Positions 28, 29, and 33 each coordinate 3-phosphoshikimate. Lys-28 contributes to the phosphoenolpyruvate binding site. Residues Gly-101 and Arg-129 each contribute to the phosphoenolpyruvate site. The 3-phosphoshikimate site is built by Ser-174, Gln-176, Asp-326, and Lys-353. Gln-176 provides a ligand contact to phosphoenolpyruvate. Asp-326 acts as the Proton acceptor in catalysis. Phosphoenolpyruvate-binding residues include Arg-357 and Arg-400.

It belongs to the EPSP synthase family. In terms of assembly, monomer.

The protein localises to the cytoplasm. The catalysed reaction is 3-phosphoshikimate + phosphoenolpyruvate = 5-O-(1-carboxyvinyl)-3-phosphoshikimate + phosphate. Its pathway is metabolic intermediate biosynthesis; chorismate biosynthesis; chorismate from D-erythrose 4-phosphate and phosphoenolpyruvate: step 6/7. Catalyzes the transfer of the enolpyruvyl moiety of phosphoenolpyruvate (PEP) to the 5-hydroxyl of shikimate-3-phosphate (S3P) to produce enolpyruvyl shikimate-3-phosphate and inorganic phosphate. The protein is 3-phosphoshikimate 1-carboxyvinyltransferase of Paracoccus denitrificans (strain Pd 1222).